We begin with the raw amino-acid sequence, 344 residues long: Fructose-1,6-bisphosphatase class 1 (344 aa).

Glu-92, Asp-115, Leu-117, and Asp-118 together coordinate Mg(2+). Substrate contacts are provided by residues 118 to 121, Asn-211, Tyr-244, and Lys-274; that span reads DGSS. Residue Glu-280 participates in Mg(2+) binding.

The protein belongs to the FBPase class 1 family. In terms of assembly, homotetramer. Mg(2+) is required as a cofactor.

It localises to the cytoplasm. The enzyme catalyses beta-D-fructose 1,6-bisphosphate + H2O = beta-D-fructose 6-phosphate + phosphate. The protein operates within carbohydrate biosynthesis; gluconeogenesis. The polypeptide is Fructose-1,6-bisphosphatase class 1 (Aeromonas hydrophila subsp. hydrophila (strain ATCC 7966 / DSM 30187 / BCRC 13018 / CCUG 14551 / JCM 1027 / KCTC 2358 / NCIMB 9240 / NCTC 8049)).